The chain runs to 412 residues: Gamma-glutamyl phosphate reductase (412 aa).

It belongs to the gamma-glutamyl phosphate reductase family.

It localises to the cytoplasm. The enzyme catalyses L-glutamate 5-semialdehyde + phosphate + NADP(+) = L-glutamyl 5-phosphate + NADPH + H(+). Its pathway is amino-acid biosynthesis; L-proline biosynthesis; L-glutamate 5-semialdehyde from L-glutamate: step 2/2. Its function is as follows. Catalyzes the NADPH-dependent reduction of L-glutamate 5-phosphate into L-glutamate 5-semialdehyde and phosphate. The product spontaneously undergoes cyclization to form 1-pyrroline-5-carboxylate. In Bartonella quintana (strain Toulouse) (Rochalimaea quintana), this protein is Gamma-glutamyl phosphate reductase.